The sequence spans 73 residues: UPF0352 protein APL_0584 (73 aa).

Belongs to the UPF0352 family.

The chain is UPF0352 protein APL_0584 from Actinobacillus pleuropneumoniae serotype 5b (strain L20).